A 1728-amino-acid polypeptide reads, in one-letter code: Protein NETWORKED 1A (1728 aa).

Positions 13-92 (YSWWWDSHIP…ERYDHATVEL (80 aa)) constitute an NAB domain. Coiled coils occupy residues 155–446 (LGNS…LEIE), 476–827 (MLRD…QVEI), 857–885 (FSEK…EIDN), 954–1016 (QFQS…AELQ), 1090–1323 (EQAE…KETV), 1403–1431 (LLQD…LRRR), and 1576–1684 (RRLA…TKSK). The segment at 1419–1441 (AEEKKRRGKLRRRSSSHRSKDRK) is disordered. A compositionally biased stretch (basic residues) spans 1424-1439 (RRGKLRRRSSSHRSKD).

The protein belongs to the NET family. Interacts with F-actin. In terms of tissue distribution, expressed in root meristems and at very low levels throughout mature vasculature.

Its subcellular location is the cytoplasm. The protein resides in the cytoskeleton. It is found in the cell membrane. It localises to the cell junction. The protein localises to the plasmodesma. Functionally, plant-specific actin binding protein. Associates with F-actin at the plasma membrane and plasmodesmata. May be part of a membrane-cytoskeletal adapter complex. The protein is Protein NETWORKED 1A of Arabidopsis thaliana (Mouse-ear cress).